The primary structure comprises 94 residues: Scorpine (94 aa).

A signal peptide spans 1-19; sequence MNSKLTALIFLGLIAIAYC. The 40-residue stretch at 55–94 folds into the BetaSPN-type CS-alpha/beta domain; it reads EFQCMANMDMLGNCEKHCQTSGEKGYCHGTKCKCGTPLSY. Cystine bridges form between Cys-58-Cys-81, Cys-68-Cys-86, and Cys-72-Cys-88.

This sequence belongs to the long chain scorpion toxin family. Class 3 subfamily. As to expression, expressed by the venom gland.

It localises to the secreted. It is found in the target cell membrane. Functionally, this full-length protein shows antibacterial activity against B.subtilis and K.pneumoniae. Also shows a potent inhibitory effect on the ookinete (ED(50) 0.7 uM) and gamete (ED(50) 10 uM) stages of Plasmodium berghei development. In addition, induces cell membrane disruption, leakage currents and cell death on HEK293 cell line (tested at 25 uM). This chain is Scorpine, found in Pandinus imperator (Emperor scorpion).